The primary structure comprises 161 residues: Nucleoside diphosphate kinase (161 aa).

ATP is bound by residues Lys-12, Phe-60, Arg-88, Thr-94, and Arg-105. His-121 functions as the Pros-phosphohistidine intermediate in the catalytic mechanism.

Belongs to the NDK family. Mg(2+) is required as a cofactor.

The protein resides in the cytoplasm. The enzyme catalyses a 2'-deoxyribonucleoside 5'-diphosphate + ATP = a 2'-deoxyribonucleoside 5'-triphosphate + ADP. It catalyses the reaction a ribonucleoside 5'-diphosphate + ATP = a ribonucleoside 5'-triphosphate + ADP. Functionally, major role in the synthesis of nucleoside triphosphates other than ATP. The ATP gamma phosphate is transferred to the NDP beta phosphate via a ping-pong mechanism, using a phosphorylated active-site intermediate. In Pyrococcus furiosus (strain ATCC 43587 / DSM 3638 / JCM 8422 / Vc1), this protein is Nucleoside diphosphate kinase.